We begin with the raw amino-acid sequence, 251 residues long: Ubiquinone/menaquinone biosynthesis C-methyltransferase UbiE (251 aa).

S-adenosyl-L-methionine is bound by residues Thr74, Asp95, 123–124, and Ser140; that span reads NA.

The protein belongs to the class I-like SAM-binding methyltransferase superfamily. MenG/UbiE family.

It catalyses the reaction a 2-demethylmenaquinol + S-adenosyl-L-methionine = a menaquinol + S-adenosyl-L-homocysteine + H(+). It carries out the reaction a 2-methoxy-6-(all-trans-polyprenyl)benzene-1,4-diol + S-adenosyl-L-methionine = a 5-methoxy-2-methyl-3-(all-trans-polyprenyl)benzene-1,4-diol + S-adenosyl-L-homocysteine + H(+). It functions in the pathway quinol/quinone metabolism; menaquinone biosynthesis; menaquinol from 1,4-dihydroxy-2-naphthoate: step 2/2. It participates in cofactor biosynthesis; ubiquinone biosynthesis. Its function is as follows. Methyltransferase required for the conversion of demethylmenaquinol (DMKH2) to menaquinol (MKH2) and the conversion of 2-polyprenyl-6-methoxy-1,4-benzoquinol (DDMQH2) to 2-polyprenyl-3-methyl-6-methoxy-1,4-benzoquinol (DMQH2). The protein is Ubiquinone/menaquinone biosynthesis C-methyltransferase UbiE of Yersinia enterocolitica serotype O:8 / biotype 1B (strain NCTC 13174 / 8081).